Reading from the N-terminus, the 114-residue chain is uncharacterized protein (114 aa).

This is an uncharacterized protein from Saccharomyces cerevisiae (strain ATCC 204508 / S288c) (Baker's yeast).